Consider the following 138-residue polypeptide: uncharacterized protein (138 aa).

A helical transmembrane segment spans residues 11–33 (ILLGLTLSLTFLYPLIITLIILY).

Its subcellular location is the membrane. This is an uncharacterized protein from Aquifex aeolicus (strain VF5).